The primary structure comprises 318 residues: Ribose-phosphate pyrophosphokinase 1 (318 aa).

Position 96 to 101 (96 to 101 (RQDKKD)) interacts with ATP. Mg(2+)-binding residues include Asp128, His130, Asp139, and Asp143. His130 provides a ligand contact to ATP. The binding of phosphoribosylpyrophosphate stretch occupies residues 212 to 227 (KDRVAILVDDMADTCG).

Belongs to the ribose-phosphate pyrophosphokinase family. In terms of assembly, homodimer. The active form is probably a hexamer composed of 3 homodimers. Mg(2+) serves as cofactor.

It carries out the reaction D-ribose 5-phosphate + ATP = 5-phospho-alpha-D-ribose 1-diphosphate + AMP + H(+). It participates in metabolic intermediate biosynthesis; 5-phospho-alpha-D-ribose 1-diphosphate biosynthesis; 5-phospho-alpha-D-ribose 1-diphosphate from D-ribose 5-phosphate (route I): step 1/1. Its activity is regulated as follows. Activated by magnesium and inorganic phosphate. Catalyzes the synthesis of phosphoribosylpyrophosphate (PRPP) that is essential for nucleotide synthesis. This Bos taurus (Bovine) protein is Ribose-phosphate pyrophosphokinase 1 (PRPS1).